The primary structure comprises 858 residues: M-phase phosphoprotein 8 (858 aa).

A disordered region spans residues 18–55 (VPDSIGRSPESEGVGAGDEEKDAATKGTVAVGDSEEDG). Residues Ser51, Ser85, Ser136, and Ser138 each carry the phosphoserine modification. Residues 59–118 (FEVERILDMKCEGGKNLYKVRWKGYTSEDDTWEPEVHLEDCKEVLLEFRKKLAENKAKAV) form the Chromo domain. Residues 80–87 (WKGYTSED) are histone H3K9me3 binding. Residues 129-175 (NDIFEADSDSDQQSDTKEDISPRKKKKKIKCKEETSPEDLRKKRTKM) form a disordered region. Thr144 is modified (phosphothreonine). Residues Ser149 and Ser164 each carry the phosphoserine; by CDK1 modification. The span at 159 to 169 (CKEETSPEDLR) shows a compositional bias: basic and acidic residues. Ser188 is modified (phosphoserine). 2 disordered regions span residues 209 to 234 (ELKDSKKPKKDEIKETKELKKANKRA) and 250 to 300 (NRKT…DKTA). Phosphoserine is present on residues Ser267, Ser271, and Ser278. Positions 273–282 (ILEDDSEDFI) are enriched in acidic residues. The span at 283–300 (SDNREENQNVRSVRDKTA) shows a compositional bias: basic and acidic residues. Phosphoserine is present on Ser318. The segment at 321–431 (EDAGTRVRRK…YDLDKEEKAR (111 aa)) is disordered. Residues 335 to 357 (RKFEEPKEIKKLESTNAFLERRA) are compositionally biased toward basic and acidic residues. Position 385 is a phosphothreonine; by CDK1 (Thr385). Residues Ser392 and Ser400 each carry the phosphoserine modification. Over residues 407 to 431 (EKEKKNEPKGKYQKRYDLDKEEKAR) the composition is skewed to basic and acidic residues. A Phosphothreonine modification is found at Thr453. ANK repeat units lie at residues 598-627 (TGMTLVMLAAAGGQDDLLRLLITKGAKVNG), 631-660 (NGTTALIHAAEKNFLTTVAILLEAGAFVNV), 664-693 (NGETALMKACKRGNSDIVRLVIECGADCNI), and 697-726 (HQNSALYFAKQCNNVLVYELLKSHLETLSR).

As to quaternary structure, homodimer. Interacts (via chromo domain) with histone H3K9me3. Has the highest affinity for H3K9me3, and lesser affinity for H3K9me2 and H3K9me1. Component of the HUSH complex; at least composed of TASOR, PPHLN1 and MPHOSPH8. Interacts with DNMT3, EHMT1 and SETDB1. Interacts with MORC2; the interaction associateS MORC2 with the HUSH complex which recruits MORC2 to heterochromatic loci. Interacts with ZNF638; leading to recruitment of the HUSH complex to unintegrated retroviral DNA. Interacts with TASOR. Phosphorylated in M (mitotic) phase. Phosphorylation by CDK1 promotes dissociation from chromatin. Expressed in the spermatogonia, spermatocytes and granular cells within the cerebellum.

The protein resides in the nucleus. It localises to the chromosome. Its function is as follows. Heterochromatin component that specifically recognizes and binds methylated 'Lys-9' of histone H3 (H3K9me) and promotes recruitment of proteins that mediate epigenetic repression. Mediates recruitment of the HUSH complex to H3K9me3 sites: the HUSH complex is recruited to genomic loci rich in H3K9me3 and is required to maintain transcriptional silencing by promoting recruitment of SETDB1, a histone methyltransferase that mediates further deposition of H3K9me3, as well as MORC2. Binds H3K9me and promotes DNA methylation by recruiting DNMT3A to target CpG sites; these can be situated within the coding region of the gene. Mediates down-regulation of CDH1 expression. Also represses L1 retrotransposons in collaboration with MORC2 and, probably, SETDB1, the silencing is dependent of repressive epigenetic modifications, such as H3K9me3 mark. Silencing events often occur within introns of transcriptionally active genes, and lead to the down-regulation of host gene expression. The HUSH complex is also involved in the silencing of unintegrated retroviral DNA by being recruited by ZNF638: some part of the retroviral DNA formed immediately after infection remains unintegrated in the host genome and is transcriptionally repressed. In Mus musculus (Mouse), this protein is M-phase phosphoprotein 8.